A 407-amino-acid polypeptide reads, in one-letter code: Na(+)-translocating NADH-quinone reductase subunit F (407 aa).

The chain crosses the membrane as a helical span at residues 4 to 24 (IILGVFFFTAIVVALVFVILG). The 93-residue stretch at 33–125 (GNVEVLINGE…NMKIHVHEEV (93 aa)) folds into the 2Fe-2S ferredoxin-type domain. Residues C68, C74, C77, and C109 each contribute to the [2Fe-2S] cluster site. The FAD-binding FR-type domain maps to 128-269 (VKKWECTVRS…SGPFGEFFAR (142 aa)).

Belongs to the NqrF family. Composed of six subunits; NqrA, NqrB, NqrC, NqrD, NqrE and NqrF. It depends on [2Fe-2S] cluster as a cofactor. FAD is required as a cofactor.

The protein resides in the cell inner membrane. It catalyses the reaction a ubiquinone + n Na(+)(in) + NADH + H(+) = a ubiquinol + n Na(+)(out) + NAD(+). Functionally, NQR complex catalyzes the reduction of ubiquinone-1 to ubiquinol by two successive reactions, coupled with the transport of Na(+) ions from the cytoplasm to the periplasm. The first step is catalyzed by NqrF, which accepts electrons from NADH and reduces ubiquinone-1 to ubisemiquinone by a one-electron transfer pathway. The polypeptide is Na(+)-translocating NADH-quinone reductase subunit F (Methylococcus capsulatus (strain ATCC 33009 / NCIMB 11132 / Bath)).